Consider the following 393-residue polypeptide: Phosphoglycerate kinase (393 aa).

Substrate contacts are provided by residues 21-23, arginine 37, 60-63, arginine 119, and arginine 152; these read DFN and HLGR. ATP is bound by residues lysine 202, glycine 291, glutamate 322, and 348 to 351; that span reads GGDT.

It belongs to the phosphoglycerate kinase family. Monomer.

It localises to the cytoplasm. It carries out the reaction (2R)-3-phosphoglycerate + ATP = (2R)-3-phospho-glyceroyl phosphate + ADP. Its pathway is carbohydrate degradation; glycolysis; pyruvate from D-glyceraldehyde 3-phosphate: step 2/5. The chain is Phosphoglycerate kinase from Coprothermobacter proteolyticus (strain ATCC 35245 / DSM 5265 / OCM 4 / BT).